The primary structure comprises 221 residues: UPF0758 protein KPN78578_39390 (221 aa).

The MPN domain maps to 99 to 221; the sequence is ALVTPSMTRE…YVSFAERGWI (123 aa). Histidine 170, histidine 172, and aspartate 183 together coordinate Zn(2+). Residues 170 to 183 carry the JAMM motif motif; sequence HNHPSGSPEPSQAD.

The protein belongs to the UPF0758 family. YicR subfamily.

The sequence is that of UPF0758 protein KPN78578_39390 from Klebsiella pneumoniae subsp. pneumoniae (strain ATCC 700721 / MGH 78578).